Here is a 136-residue protein sequence, read N- to C-terminus: ATP synthase epsilon chain, plastid (136 aa).

Belongs to the ATPase epsilon chain family. As to quaternary structure, F-type ATPases have 2 components, CF(1) - the catalytic core - and CF(0) - the membrane proton channel. CF(1) has five subunits: alpha(3), beta(3), gamma(1), delta(1), epsilon(1). CF(0) has three main subunits: a, b and c.

The protein resides in the plastid thylakoid membrane. Its function is as follows. Produces ATP from ADP in the presence of a proton gradient across the membrane. This is ATP synthase epsilon chain, plastid from Cuscuta reflexa (Southern Asian dodder).